A 296-amino-acid polypeptide reads, in one-letter code: Phosphatidylglycerol--prolipoprotein diacylglyceryl transferase (296 aa).

Transmembrane regions (helical) follow at residues 28–48 (WYGLCFSLGILFASLLGIYLA), 72–92 (FALYSLLFIIPGSRIAYILFY), 110–130 (GGLASHGGMLGLILWALIFSW), and 139–159 (LTFLFLCDLCASVFGCAAFMI). Arginine 160 contacts a 1,2-diacyl-sn-glycero-3-phospho-(1'-sn-glycerol). The next 3 helical transmembrane spans lie at 197-217 (VQLYEGMSYLLLSIILFFLSY), 226-246 (GWVTSLGLVGISLIRFFAEFF), and 263-283 (GQILSFPLFVFGLCLGIACFL).

It belongs to the Lgt family.

The protein resides in the cell inner membrane. It carries out the reaction L-cysteinyl-[prolipoprotein] + a 1,2-diacyl-sn-glycero-3-phospho-(1'-sn-glycerol) = an S-1,2-diacyl-sn-glyceryl-L-cysteinyl-[prolipoprotein] + sn-glycerol 1-phosphate + H(+). It functions in the pathway protein modification; lipoprotein biosynthesis (diacylglyceryl transfer). In terms of biological role, catalyzes the transfer of the diacylglyceryl group from phosphatidylglycerol to the sulfhydryl group of the N-terminal cysteine of a prolipoprotein, the first step in the formation of mature lipoproteins. The sequence is that of Phosphatidylglycerol--prolipoprotein diacylglyceryl transferase from Chlamydia caviae (strain ATCC VR-813 / DSM 19441 / 03DC25 / GPIC) (Chlamydophila caviae).